A 369-amino-acid polypeptide reads, in one-letter code: Anhydro-N-acetylmuramic acid kinase (369 aa).

12–19 (GTSLDGVD) provides a ligand contact to ATP.

It belongs to the anhydro-N-acetylmuramic acid kinase family.

The catalysed reaction is 1,6-anhydro-N-acetyl-beta-muramate + ATP + H2O = N-acetyl-D-muramate 6-phosphate + ADP + H(+). The protein operates within amino-sugar metabolism; 1,6-anhydro-N-acetylmuramate degradation. It functions in the pathway cell wall biogenesis; peptidoglycan recycling. Functionally, catalyzes the specific phosphorylation of 1,6-anhydro-N-acetylmuramic acid (anhMurNAc) with the simultaneous cleavage of the 1,6-anhydro ring, generating MurNAc-6-P. Is required for the utilization of anhMurNAc either imported from the medium or derived from its own cell wall murein, and thus plays a role in cell wall recycling. The polypeptide is Anhydro-N-acetylmuramic acid kinase (Escherichia coli O45:K1 (strain S88 / ExPEC)).